We begin with the raw amino-acid sequence, 76 residues long: Omega-conotoxin-like TxMKLT1-0211 (76 aa).

An N-terminal signal peptide occupies residues 1 to 22; it reads MKLTCMMIVAVLFLTAWTFVTA. The propeptide occupies 23–52; sequence VPHSSNALENLYLKAHHEMNNPEDSELNKR. Intrachain disulfides connect C53–C67, C60–C71, and C66–C75.

The protein belongs to the conotoxin O1 superfamily. In terms of tissue distribution, expressed by the venom duct.

The protein localises to the secreted. Omega-conotoxins act at presynaptic membranes, they bind and block voltage-gated calcium channels (Cav). This is Omega-conotoxin-like TxMKLT1-0211 from Conus textile (Cloth-of-gold cone).